The chain runs to 201 residues: Protein FAR-RED-ELONGATED HYPOCOTYL 1-LIKE (201 aa).

The Nuclear localization sequence (NLS) motif lies at 32-35; it reads KKRK. The Nuclear export sequence (NES) motif lies at 43-46; that stretch reads LLPL.

This sequence belongs to the FHY1 protein family. Homodimer and heterodimer with FHY1. Interacts with PHYA, especially upon far-red (FR) light illumination. Binds to LAF1 and HFR1. In terms of processing, inactivated by rapid reversible PHYA-mediated phosphorylation.

Its subcellular location is the nucleus. The protein localises to the cytoplasm. Its function is as follows. Can activate transcription. Essential for light-regulated PHYA nuclear accumulation and subsequent PHYA phototropic signaling processes. PHYA-specific signal transducer in response to continuous FR lights. Mediates the association of PHYA with HFR1 and LAF1 in the nucleus in response to FR conditions. Contributes to inhibition of hypocotyl elongation in continuous blue light (B). The chain is Protein FAR-RED-ELONGATED HYPOCOTYL 1-LIKE from Arabidopsis thaliana (Mouse-ear cress).